The following is a 960-amino-acid chain: MWRAGRAAVACEVCQSLVKHSSGIQRNVPLQKLHLVSRSIYRSHHPALKLQRPQLRTPFQQFSSLTHLSLHKLKLSPIKYGYQPRRNFWPARLAARLLKLRYIILGSAVGGGYTAKKTFDEWKDMIPDLSDYKWIVPDFIWEIDEYIDLEKIRKALPSSEDLASLAPDLDKITESLSLLKDFFTAGSPGETAFRATDHGSESDKHYRKVSDKEKIDQLQEELLHTQLKYQRILERLEKENKELRKLVLQKDDKGIHHRKLKKSLIDMYSEVLDVLSDYDASYNTQDHLPRVVVVGDQSAGKTSVLEMIAQARIFPRGSGEMMTRSPVKVTLSEGPHHVALFKDSSREFDLTKEEDLAALRHEIELRMRKNVKEGCTVSPETISLNVKGPGLQRMVLVDLPGVINTVTSGMAPDTKETIFSISKAYMQNPNAIILCIQDGSVDAERSIVTDLVSQMDPHGRRTIFVLTKVDLAEKNVASPSRIQQIIEGKLFPMKALGYFAVVTGKGNSSESIEAIREYEEEFFQNSKLLKTSMLKAHQVTTRNLSLAVSDCFWKMVRESVEQQADSFKATRFNLETEWKNNYPRLRELDRNELFEKAKNEILDEVISLSQVTPKHWEEILQQSLWERVSTHVIENIYLPAAQTMNSGTFNTTVDIKLKQWTDKQLPNKAVEVAWETLQEEFSRFMTEPKGKEHDDIFDKLKEAVKEESIKRHKWNDFAEDSLRVIQHNALEDRSISDKQQWDAAIYFMEEALQGRLKDTENAIENMIGPDWKKRWMYWKNRTQEQCVHNETKNELEKMLKVNDEHPAYLASDEITTVRKNLESRGVEVDPSLIKDTWHQVYRRHFLKTALNHCNLCRRGFYYYQRHFIDSELECNDVVLFWRIQRMLAITANTLRQQLTNTEVRRLEKNVKEVLEDFAEDGEKKVKLLTGKRVQLAEDLKKVREIQEKLDAFIEALHQEK.

A mitochondrion-targeting transit peptide spans 1–87 (MWRAGRAAVA…IKYGYQPRRN (87 aa)). Residues 88 to 96 (FWPARLAAR) are Mitochondrial matrix-facing. The helical transmembrane segment at 97 to 113 (LLKLRYIILGSAVGGGY) threads the bilayer. At 114 to 770 (TAKKTFDEWK…NAIENMIGPD (657 aa)) the chain is on the mitochondrial intermembrane side. Residues 210 to 254 (SDKEKIDQLQEELLHTQLKYQRILERLEKENKELRKLVLQKDDKG) are a coiled coil. The LQQQIQ motif signature appears at 217-222 (QLQEEL). Position 228 is an N6-acetyllysine (Lys-228). Residues 285–561 (QDHLPRVVVV…FWKMVRESVE (277 aa)) enclose the Dynamin-type G domain. A G1 motif region spans residues 295–302 (GDQSAGKT). Positions 298, 300, 301, 302, 303, and 317 each coordinate GTP. Thr-302 contacts Mg(2+). Positions 321–324 (MMTR) are G2 motif. Thr-323 and Asp-398 together coordinate Mg(2+). Positions 398-401 (DLPG) are G3 motif. Residues 467–470 (TKVD) are G4 motif. The GTP site is built by Lys-468, Asp-470, and Thr-503. A G5 motif region spans residues 501–504 (VVTG). 2 stalk region regions span residues 589–836 (DRNE…IKDT) and 874–928 (CNDV…VKLL). The segment at 736-856 (SDKQQWDAAI…KTALNHCNLC (121 aa)) is paddle region. An intramembrane segment occupies 771 to 781 (WKKRWMYWKNR). The Mitochondrial intermembrane segment spans residues 782–960 (TQEQCVHNET…AFIEALHQEK (179 aa)). Cys-856 and Cys-874 are oxidised to a cystine. Positions 895-960 (RQQLTNTEVR…AFIEALHQEK (66 aa)) form a coiled coil.

Belongs to the TRAFAC class dynamin-like GTPase superfamily. Dynamin/Fzo/YdjA family. As to quaternary structure, oligomeric complex consisting of membrane-bound and soluble forms of OPA1. Interacts with RCC1L; RCC1L acts as a guanine nucleotide exchange factor (GEF) for OPA1 by exchanging bound GDP for free GTP. Interacts with CHCHD3 and IMMT; these interactions occur preferentially with soluble OPA1 forms. Interacts with PRELID1. Post-translationally, cleaved by OMA1 or YME1L downstream of the transmembrane region in response to different signals to generate soluble forms. Cleaved by OMA1 at position S1 following stress conditions, generating the short soluble form (Dynamin-like GTPase OPA1, short form; S-OPA1). AFG3L2 is involved in the regulation of OMA1-dependent processing of OPA1. PARL-dependent proteolytic processing releases an antiapoptotic soluble form not required for mitochondrial fusion. Cleavage at position S2 by YME1L is required to mediate oxidative phosphorylation (OXPHOS)-induced mitochondrial fusion. Cleavage occurs in the sequence motif Leu-Gln-Gln-Gln-Ile-Gln (LQQQIQ). In terms of processing, cleavage at position S3 by YME1L is required for membrane tubulation. Detected in brain (at protein level). Detected in brain, brain stem, heart, kidney, liver and skeletal muscle.

It is found in the mitochondrion inner membrane. The protein resides in the mitochondrion intermembrane space. It carries out the reaction GTP + H2O = GDP + phosphate + H(+). With respect to regulation, activated by guanine nucleotide exchange factor RCC1L. Dynamin-related GTPase that is essential for normal mitochondrial morphology by mediating fusion of the mitochondrial inner membranes, regulating cristae morphology and maintaining respiratory chain function. Exists in two forms: the transmembrane, long form (Dynamin-like GTPase OPA1, long form; L-OPA1), which is tethered to the inner mitochondrial membrane, and the short soluble form (Dynamin-like GTPase OPA1, short form; S-OPA1), which results from proteolytic cleavage and localizes in the intermembrane space. Both forms (L-OPA1 and S-OPA1) cooperate to catalyze the fusion of the mitochondrial inner membrane. The equilibrium between L-OPA1 and S-OPA1 is essential: excess levels of S-OPA1, produced by cleavage by OMA1 following loss of mitochondrial membrane potential, lead to an impaired equilibrium between L-OPA1 and S-OPA1, inhibiting mitochondrial fusion. The balance between L-OPA1 and S-OPA1 also influences cristae shape and morphology. Involved in remodeling cristae and the release of cytochrome c during apoptosis. Proteolytic processing by PARL in response to intrinsic apoptotic signals may lead to disassembly of OPA1 oligomers and release of the caspase activator cytochrome C (CYCS) into the mitochondrial intermembrane space. Acts as a regulator of T-helper Th17 cells, which are characterized by cells with fused mitochondria with tight cristae, by mediating mitochondrial membrane remodeling: OPA1 is required for interleukin-17 (IL-17) production. Its role in mitochondrial morphology is required for mitochondrial genome maintenance. Its function is as follows. Constitutes the transmembrane long form (L-OPA1) that plays a central role in mitochondrial inner membrane fusion and cristae morphology. L-OPA1 and the soluble short form (S-OPA1) form higher-order helical assemblies that coordinate the fusion of mitochondrial inner membranes. Inner membrane-anchored L-OPA1 molecules initiate membrane remodeling by recruiting soluble S-OPA1 to rapidly polymerize into a flexible cylindrical scaffold encaging the mitochondrial inner membrane. Once at the membrane surface, the formation of S-OPA1 helices induce bilayer curvature. OPA1 dimerization through the paddle region, which inserts into cardiolipin-containing membrane, promotes GTP hydrolysis and the helical assembly of a flexible OPA1 lattice on the membrane, which drives membrane curvature and mitochondrial fusion. Plays a role in the maintenance and remodeling of mitochondrial cristae, some invaginations of the mitochondrial inner membrane that provide an increase in the surface area. Probably acts by forming helical filaments at the inside of inner membrane tubes with the shape and dimensions of crista junctions. The equilibrium between L-OPA1 and S-OPA1 influences cristae shape and morphology: increased L-OPA1 levels promote cristae stacking and elongated mitochondria, while increased S-OPA1 levels correlated with irregular cristae packing and round mitochondria shape. Functionally, constitutes the soluble short form (S-OPA1) generated by cleavage by OMA1, which plays a central role in mitochondrial inner membrane fusion and cristae morphology. The transmembrane long form (L-OPA1) and the S-OPA1 form higher-order helical assemblies that coordinate the fusion of mitochondrial inner membranes. Inner membrane-anchored L-OPA1 molecules initiate membrane remodeling by recruiting soluble S-OPA1 to rapidly polymerize into a flexible cylindrical scaffold encaging the mitochondrial inner membrane. Once at the membrane surface, the formation of S-OPA1 helices induce bilayer curvature. OPA1 dimerization through the paddle region, which inserts into cardiolipin-containing membrane, promotes GTP hydrolysis and the helical assembly of a flexible OPA1 lattice on the membrane, which drives membrane curvature and mitochondrial fusion. Excess levels of S-OPA1 produced by cleavage by OMA1 following stress conditions that induce loss of mitochondrial membrane potential, lead to an impaired equilibrium between L-OPA1 and S-OPA1, thereby inhibiting mitochondrial fusion. Involved in mitochondrial safeguard in response to transient mitochondrial membrane depolarization by mediating flickering: cleavage by OMA1 leads to excess production of S-OPA1, preventing mitochondrial hyperfusion. Plays a role in the maintenance and remodeling of mitochondrial cristae, some invaginations of the mitochondrial inner membrane that provide an increase in the surface area. Probably acts by forming helical filaments at the inside of inner membrane tubes with the shape and dimensions of crista junctions. The equilibrium between L-OPA1 and S-OPA1 influences cristae shape and morphology: increased L-OPA1 levels promote cristae stacking and elongated mitochondria, while increased S-OPA1 levels correlated with irregular cristae packing and round mitochondria shape. In terms of biological role, isoforms that contain the alternative exon 4b are required for mitochondrial genome maintenance, possibly by anchoring the mitochondrial nucleoids to the inner mitochondrial membrane. The sequence is that of Dynamin-like GTPase OPA1, mitochondrial from Mus musculus (Mouse).